The sequence spans 147 residues: Deoxyuridine 5'-triphosphate nucleotidohydrolase (147 aa).

Arg-24 serves as a coordination point for Mg(2+). Residues 68-70 (PRS), 82-85 (GVID), Tyr-88, Gly-93, Ile-95, and Arg-111 contribute to the dUTP site.

Belongs to the dUTPase family. Requires Mg(2+) as cofactor.

The catalysed reaction is dUTP + H2O = dUMP + diphosphate + H(+). This enzyme is involved in nucleotide metabolism: it produces dUMP, the immediate precursor of thymidine nucleotides and it decreases the intracellular concentration of dUTP so that uracil cannot be incorporated into DNA. This Bos taurus (Bovine) protein is Deoxyuridine 5'-triphosphate nucleotidohydrolase (OPG046).